We begin with the raw amino-acid sequence, 53 residues long: MGVQISPYTNPVLFWGVFEVRGTSKGVGVILTRFFLEIFMILVFVGFETRCLW.

It localises to the mitochondrion matrix. The protein localises to the kinetoplast. This is an uncharacterized protein from Trypanosoma brucei brucei.